Reading from the N-terminus, the 380-residue chain is MAAVNWLKDEPYPEKPTRRNHLSFGPARLPTGDWDWIMTYYKPEAREWLRTMNNPLWSGPEDVLGLLPAGVPVTEKIFVKEVYPGLKGFLQMFIPVKVAGCLLFGFSPLSRTGMATLKTAPVFRGGYAPAAPGIPMQVYAWEMACKIDAAPRLFKWELIVGEYFVRLATLSECSAGGDVGAYIRGGRPISIEAAAVKTRELASTLYLLAQNNVYHGDVKIANTVITEPHGRLGLIDFEMAHPLDMTMSGLREGLEVPIKWDMVCTDEYRAPEGHGPFPDILSAEAQLVWQVGLFMLDVIGIEIIENRNQGLWEQPDFPGLAAREVGIGRSLLACEHRAFLDYLTIARGCLRTNPRERPRLTLLIAQLTKFIREVATQPEH.

One can recognise a Protein kinase domain in the interval 93–371 (FIPVKVAGCL…LLIAQLTKFI (279 aa)). Lysine 118 contacts ATP. The active-site Proton acceptor is aspartate 217.

Belongs to the protein kinase superfamily. Ser/Thr protein kinase family.

The catalysed reaction is L-seryl-[protein] + ATP = O-phospho-L-seryl-[protein] + ADP + H(+). It catalyses the reaction L-threonyl-[protein] + ATP = O-phospho-L-threonyl-[protein] + ADP + H(+). This is Protein kinase ORF15 (ORF15) from Ictalurid herpesvirus 1 (strain Auburn) (IcHV-1).